We begin with the raw amino-acid sequence, 312 residues long: GDSL esterase/lipase At2g38180 (312 aa).

An N-terminal signal peptide occupies residues 1-22 (MVGPVRPQIVLFGSSIVQYSFT). N79 carries an N-linked (GlcNAc...) asparagine glycan. The tract at residues 285–312 (EPPHPVSLCDHELTQNEQLEPPQPTARL) is disordered.

The protein belongs to the 'GDSL' lipolytic enzyme family.

The protein resides in the secreted. In Arabidopsis thaliana (Mouse-ear cress), this protein is GDSL esterase/lipase At2g38180.